Consider the following 355-residue polypeptide: UDP-N-acetylglucosamine--N-acetylmuramyl-(pentapeptide) pyrophosphoryl-undecaprenol N-acetylglucosamine transferase (355 aa).

UDP-N-acetyl-alpha-D-glucosamine contacts are provided by residues 14–16 (TGG), Asn-123, Arg-164, Ser-190, and Gln-284.

The protein belongs to the glycosyltransferase 28 family. MurG subfamily.

It localises to the cell inner membrane. The catalysed reaction is di-trans,octa-cis-undecaprenyl diphospho-N-acetyl-alpha-D-muramoyl-L-alanyl-D-glutamyl-meso-2,6-diaminopimeloyl-D-alanyl-D-alanine + UDP-N-acetyl-alpha-D-glucosamine = di-trans,octa-cis-undecaprenyl diphospho-[N-acetyl-alpha-D-glucosaminyl-(1-&gt;4)]-N-acetyl-alpha-D-muramoyl-L-alanyl-D-glutamyl-meso-2,6-diaminopimeloyl-D-alanyl-D-alanine + UDP + H(+). Its pathway is cell wall biogenesis; peptidoglycan biosynthesis. Its function is as follows. Cell wall formation. Catalyzes the transfer of a GlcNAc subunit on undecaprenyl-pyrophosphoryl-MurNAc-pentapeptide (lipid intermediate I) to form undecaprenyl-pyrophosphoryl-MurNAc-(pentapeptide)GlcNAc (lipid intermediate II). The polypeptide is UDP-N-acetylglucosamine--N-acetylmuramyl-(pentapeptide) pyrophosphoryl-undecaprenol N-acetylglucosamine transferase (Synechocystis sp. (strain ATCC 27184 / PCC 6803 / Kazusa)).